A 348-amino-acid chain; its full sequence is 4-hydroxy-2-oxovalerate aldolase 1 (348 aa).

In terms of domain architecture, Pyruvate carboxyltransferase spans 8-260 (ITVHDMTLRD…QTGVDVWAIQ (253 aa)). 16–17 (RD) is a substrate binding site. Asp-17 contributes to the Mn(2+) binding site. The active-site Proton acceptor is His-20. Substrate-binding residues include Ser-170 and His-199. Residues His-199 and His-201 each contribute to the Mn(2+) site. A substrate-binding site is contributed by Tyr-290.

The protein belongs to the 4-hydroxy-2-oxovalerate aldolase family.

The enzyme catalyses (S)-4-hydroxy-2-oxopentanoate = acetaldehyde + pyruvate. The sequence is that of 4-hydroxy-2-oxovalerate aldolase 1 from Cupriavidus metallidurans (strain ATCC 43123 / DSM 2839 / NBRC 102507 / CH34) (Ralstonia metallidurans).